A 508-amino-acid chain; its full sequence is Cytochrome P450 monooxygenase dmxR5 (508 aa).

Residues 24–44 form a helical membrane-spanning segment; that stretch reads LTLGLGAILVVLMSFLAFLSY. 2 N-linked (GlcNAc...) asparagine glycosylation sites follow: Asn387 and Asn405. Cys451 serves as a coordination point for heme. N-linked (GlcNAc...) asparagine glycosylation occurs at Asn462. A disordered region spans residues 481–508; the sequence is EHKKSTQESGHGVPLPSKLSKFSPREEN.

This sequence belongs to the cytochrome P450 family. Heme is required as a cofactor.

It localises to the membrane. Its pathway is secondary metabolite biosynthesis. Its function is as follows. Cytochrome P450 monooxygenase; part of the gene cluster that mediates the biosynthesis of the dimeric xanthones cryptosporioptides. The pathway begins with the synthesis of atrochrysone thioester by the polyketide synthase dmx-nrPKS. The atrochrysone carboxyl ACP thioesterase dmxR1 then breaks the thioester bond and releases the atrochrysone carboxylic acid from dmx-nrPKS. Atrochrysone carboxylic acid is decarboxylated by the decarboxylase dmxR15, and oxidized by the anthrone oxygenase dmxR16 to yield emodin. Emodin is then reduced to emodin hydroquinone by the oxidoreductase dmxR7. A-ring reduction by the short chain dehydrogenase dmxR18, dehydration by the scytalone dehydratase-like protein dmxR17 and probable spontaneous re-oxidation, results in overall deoxygenation to chrysophanol. Baeyer-Villiger oxidation by the Baeyer-Villiger monooxygenase (BVMO) dmxR6 then yields monodictylactone in equilibrium with monodictyphenone. In the case of the cryptosporioptides biosynthesis, monodictylactone is reduced at C-12 to an alcohol (by the short chain dehydrogenases dmxR12 or dmxR8) and hydroxylated at C-5 by dmxR9, yielding the electron-rich aromatic which could eliminate H(2)O to form the ortho-quinonemethide, followed by tautomerisation to paraquinone and complete the formal reduction to produce the 10-methylgroup. Conjugate addition of C-4a-OH to the resulting paraquinone by the monooxygenase dmxR10 then gives cyclohexadienone, which is then reduced at C-5 by the short chain dehydrogenase dmxR3 to give the dihydroxanthone. The 6,7-epoxide in the cryptosporioptides could be introduced by the cytochrome P450 monooxygenase dmxL3. The highly reducing PKS dmxL2 manufactures butyrate, which is further carboxylated by dmxL1 to form ethylmalonate. It is not yet clear whether the carboxylation occurs while the butyrate is attached to the ACP of dmxL2, but this unusual fungal metabolite could then be esterified to O-5 by the O-acetyltransferase dmxR13. Finally, dimerization performed by dmxR5 gives the observed dimers cryptosporioptides A, B and C as the final products of the pathway. The protein is Cytochrome P450 monooxygenase dmxR5 of Cryptosporiopsis sp. (strain 8999).